A 462-amino-acid chain; its full sequence is Histidine--tRNA ligase (462 aa).

This sequence belongs to the class-II aminoacyl-tRNA synthetase family. Homodimer.

It is found in the cytoplasm. It carries out the reaction tRNA(His) + L-histidine + ATP = L-histidyl-tRNA(His) + AMP + diphosphate + H(+). In Trichormus variabilis (strain ATCC 29413 / PCC 7937) (Anabaena variabilis), this protein is Histidine--tRNA ligase.